A 208-amino-acid polypeptide reads, in one-letter code: MKIVEVNHPLVKHKLGLMRAHDISTKRFRELAAEIGSLLTYEATADLETEKVTIDGWCGPVVVEQIKGKKITVVPILRAGLGMMDGVLENVPSARISVVGVYRNEETLEPVPYFQKLASNIDERMALLVDPMLATGGSMIATIDLLKKAGCQSIKVLVLVAAPEGIAALEKAHPDVELYTASIDERLNEQGYIVPGLGDAGDKIFGTK.

5-phospho-alpha-D-ribose 1-diphosphate is bound by residues Arg78, Arg103, and 130-138 (DPMLATGGS). Uracil-binding positions include Ile193 and 198 to 200 (GDA). Residue Asp199 participates in 5-phospho-alpha-D-ribose 1-diphosphate binding.

It belongs to the UPRTase family. It depends on Mg(2+) as a cofactor.

The catalysed reaction is UMP + diphosphate = 5-phospho-alpha-D-ribose 1-diphosphate + uracil. It functions in the pathway pyrimidine metabolism; UMP biosynthesis via salvage pathway; UMP from uracil: step 1/1. With respect to regulation, allosterically activated by GTP. Functionally, catalyzes the conversion of uracil and 5-phospho-alpha-D-ribose 1-diphosphate (PRPP) to UMP and diphosphate. The chain is Uracil phosphoribosyltransferase from Photorhabdus laumondii subsp. laumondii (strain DSM 15139 / CIP 105565 / TT01) (Photorhabdus luminescens subsp. laumondii).